Reading from the N-terminus, the 87-residue chain is Antitoxin RelB1 (87 aa).

In terms of biological role, antitoxin component of a type II toxin-antitoxin (TA) system. Neutralizes the effect of cognate toxin RelE1, but no other RelE or ParE toxin. The sequence is that of Antitoxin RelB1 (relB1) from Caulobacter vibrioides (strain ATCC 19089 / CIP 103742 / CB 15) (Caulobacter crescentus).